Reading from the N-terminus, the 2021-residue chain is HEAT repeat-containing protein 5A (2021 aa).

HEAT repeat units follow at residues 795 to 836 and 1059 to 1096; these read SQRP…HLAS and VNLSSLVPTLCVHLYSPHLPLRRAVLACLRQLAQREAA. Disordered stretches follow at residues 1503–1528 and 1989–2012; these read EGNGHLSRPVTPTSMGQERGSQLPAD and RGNQESLKPKAPSRGTMGGGHGSP. Positions 1512–1522 are enriched in polar residues; sequence VTPTSMGQERG.

It belongs to the HEATR5 family.

This Xenopus tropicalis (Western clawed frog) protein is HEAT repeat-containing protein 5A (heatr5a).